Here is a 592-residue protein sequence, read N- to C-terminus: Salivary peroxidase/catechol oxidase (592 aa).

A signal peptide spans 1 to 21 (MWMFLKLLLFVCSSWWSCAQA). Residues C24 and C37 are joined by a disulfide bond. A glycan (N-linked (GlcNAc...) asparagine) is linked at N25. The active-site Proton acceptor is the H110. Ca(2+) is bound by residues D111, T187, F189, D191, and S193. N230 is a glycosylation site (N-linked (GlcNAc...) asparagine). C235 and C244 are oxidised to a cystine. H353 serves as a coordination point for heme b. An N-linked (GlcNAc...) asparagine glycan is attached at N366. Cystine bridges form between C452/C509 and C553/C580.

This sequence belongs to the peroxidase family. XPO subfamily. Female salivary gland.

The protein localises to the secreted. The catalysed reaction is 2 catechol + O2 = 2 1,2-benzoquinone + 2 H2O. Inhibits noradrenaline-induced smooth muscle contraction in the host, probably due to the oxidation of noradrenaline, resulting in vasodilation. Exhibits peroxidase activity. The polypeptide is Salivary peroxidase/catechol oxidase (Anopheles albimanus (New world malaria mosquito)).